The primary structure comprises 206 residues: Small ribosomal subunit protein uS4 (206 aa).

An S4 RNA-binding domain is found at 96 to 156 (TRLDNVVYRM…EKSRTQARIK (61 aa)).

It belongs to the universal ribosomal protein uS4 family. As to quaternary structure, part of the 30S ribosomal subunit. Contacts protein S5. The interaction surface between S4 and S5 is involved in control of translational fidelity.

In terms of biological role, one of the primary rRNA binding proteins, it binds directly to 16S rRNA where it nucleates assembly of the body of the 30S subunit. With S5 and S12 plays an important role in translational accuracy. The protein is Small ribosomal subunit protein uS4 of Shewanella halifaxensis (strain HAW-EB4).